We begin with the raw amino-acid sequence, 369 residues long: Histone deacetylase-like amidohydrolase (369 aa).

His-143 (proton donor/acceptor) is an active-site residue. Zn(2+)-binding residues include Asp-180, His-182, and Asp-268.

Belongs to the histone deacetylase family. As to quaternary structure, homotetramer; dimer of dimers. Requires Zn(2+) as cofactor.

With respect to regulation, zinc, and cobalt and nickel at a lesser extent, are able to increase the catalytic activity (2.2-, 1.3- and 1.1-fold respectively) at concentrations of 1 mM. Higher concentrations have an inhibitory effect. Magnesium, manganese and calcium have no effect on activity at concentrations between 0 and 10 mM. At 100 mM, the catalytic activity is increased between 1.2- and 2.1-fold. Hydroxamates like TSA and SAHA inhibit the enzyme. Is also inhibited by azobenzenes, stilbenes and arylazopyrazoles. Exhibits significant levels of protein deacetylase activity comparable to those of eukaryotic HDACs in assays both with fluorogenic peptidic substrates and acetate-radiolabeled histones. Accepts proteins with epsilon-acetylated lysine residues and tritiated-acetate-prelabeled chicken histones as substrates. The natural substrate protein is not yet known. This is Histone deacetylase-like amidohydrolase (hdaH) from Alcaligenes sp. (strain DSM 11172) (Bordetella sp. (strain FB188)).